The following is a 456-amino-acid chain: NAD-dependent deacetylase sir2C (456 aa).

Residues 161 to 443 form the Deacetylase sirtuin-type domain; that stretch reads IEIENNKIKE…LNLSKLLNWD (283 aa). Histidine 294 (proton acceptor) is an active-site residue. Zn(2+) contacts are provided by cysteine 302, cysteine 305, cysteine 331, and cysteine 336.

It belongs to the sirtuin family. The cofactor is Zn(2+).

It carries out the reaction N(6)-acetyl-L-lysyl-[protein] + NAD(+) + H2O = 2''-O-acetyl-ADP-D-ribose + nicotinamide + L-lysyl-[protein]. Functionally, NAD-dependent deacetylase, which plays an important role in the regulation of transcriptional repression. This is NAD-dependent deacetylase sir2C (sir2C) from Dictyostelium discoideum (Social amoeba).